The primary structure comprises 1068 residues: Disheveled-associated activator of morphogenesis 2 (1068 aa).

One can recognise a GBD/FH3 domain in the interval 40–416; it reads SPIPNAEELN…QIVLQDERGV (377 aa). Positions 434–516 form a coiled coil; sequence MLINENEVKQ…LVAQLSELST (83 aa). The disordered stretch occupies residues 514-586; that stretch reads LSTGPVSSPP…MGLPLPQDPY (73 aa). Residues 518-594 enclose the FH1 domain; it reads PVSSPPPPGG…PYPSSDVPLR (77 aa). Pro residues predominate over residues 540 to 572; sequence LPPPPPPLPFACCPPPPPPPLPPGGPPTPPGAP. The FH2 domain maps to 595 to 994; the sequence is KKRVPQPSHP…EERRARMEAM (400 aa). S1015 is modified (phosphoserine). Positions 1016-1048 constitute a DAD domain; the sequence is SLEEGGEFDDLVSALRSGEVFDKDLCKLKRSRK.

It belongs to the formin homology family. As to quaternary structure, interacts with DVL3. Interacts with INF2. As to expression, expressed in most tissues examined. Expressed in kidney glomeruli.

In terms of biological role, key regulator of the Wnt signaling pathway, which is required for various processes during development, such as dorsal patterning, determination of left/right symmetry or myelination in the central nervous system. Acts downstream of Wnt ligands and upstream of beta-catenin (CTNNB1). Required for canonical Wnt signaling pathway during patterning in the dorsal spinal cord by promoting the aggregation of Disheveled (Dvl) complexes, thereby clustering and formation of Wnt receptor signalosomes and potentiating Wnt activity. During dorsal patterning of the spinal cord, inhibits oligodendrocytes differentiation via interaction with PIP5K1A. Also regulates non-canonical Wnt signaling pathway. Acts downstream of PITX2 in the developing gut and is required for left/right asymmetry within dorsal mesentery: affects mesenchymal condensation by lengthening cadherin-based junctions through WNT5A and non-canonical Wnt signaling, inducing polarized condensation in the left dorsal mesentery necessary to initiate gut rotation. Together with DAAM1, required for myocardial maturation and sarcomere assembly. Is a regulator of actin nucleation and elongation, filopodia formation and podocyte migration. This chain is Disheveled-associated activator of morphogenesis 2, found in Homo sapiens (Human).